The following is a 356-amino-acid chain: DNA polymerase IV (356 aa).

One can recognise a UmuC domain in the interval 1 to 188 (MDTSRKIIHI…IPVTKFYGVG (188 aa)). Positions 11 and 106 each coordinate Mg(2+). The active site involves Glu-107.

Belongs to the DNA polymerase type-Y family. In terms of assembly, monomer. Requires Mg(2+) as cofactor.

It localises to the cytoplasm. It carries out the reaction DNA(n) + a 2'-deoxyribonucleoside 5'-triphosphate = DNA(n+1) + diphosphate. In terms of biological role, poorly processive, error-prone DNA polymerase involved in untargeted mutagenesis. Copies undamaged DNA at stalled replication forks, which arise in vivo from mismatched or misaligned primer ends. These misaligned primers can be extended by PolIV. Exhibits no 3'-5' exonuclease (proofreading) activity. May be involved in translesional synthesis, in conjunction with the beta clamp from PolIII. In Listeria innocua serovar 6a (strain ATCC BAA-680 / CLIP 11262), this protein is DNA polymerase IV.